Consider the following 114-residue polypeptide: PDZK1-interacting protein 1 (114 aa).

Topologically, residues 1 to 28 are extracellular; that stretch reads MSAFGLLILGLLTAVPPASCRQGLGNLQ. A helical membrane pass occupies residues 29 to 51; sequence PWMQGLIAVAVFLVLVAIAFAVN. At 52–114 the chain is on the cytoplasmic side; the sequence is HFWCQEEPEP…EEGKVRSTPM (63 aa). Ser-85 bears the Phosphoserine mark. The tract at residues 95 to 114 is disordered; that stretch reads HENAYENVPEEEGKVRSTPM. Basic and acidic residues predominate over residues 105 to 114; the sequence is EEGKVRSTPM.

The protein belongs to the PDZK1-interacting protein 1/SMIM24 family. In terms of assembly, forms a heterodimer (via N-terminal transmembrane helix) with SLC5A2/SGLT2 (via TM13); this interaction enhances SLC5A2 transporter activity. Interacts with PDZK1.

The protein localises to the apical cell membrane. Auxiliary protein of electrogenic Na(+)-coupled sugar symporter SLC5A2/SGLT2 and SLC5A1/SGLT1. Essential for the transporter activity of SLC5A2/SGLT2 but not SLC5A1/SGLT1. The chain is PDZK1-interacting protein 1 from Pongo abelii (Sumatran orangutan).